Reading from the N-terminus, the 244-residue chain is 3-oxoacyl-[acyl-carrier-protein] reductase FabG (244 aa).

NADP(+)-binding positions include 12–15 and Thr37; that span reads GANQ. Ca(2+) is bound by residues Lys50 and Gly53. NADP(+) is bound by residues 59–60 and Asn86; that span reads DL. Ser138 contacts substrate. Ca(2+) is bound at residue Asn145. Tyr151 functions as the Proton acceptor in the catalytic mechanism. Residues 151-155 and Ile184 contribute to the NADP(+) site; that span reads YSASK. Ca(2+) contacts are provided by Gln233 and Thr234.

The protein belongs to the short-chain dehydrogenases/reductases (SDR) family. As to quaternary structure, homotetramer.

The catalysed reaction is a (3R)-hydroxyacyl-[ACP] + NADP(+) = a 3-oxoacyl-[ACP] + NADPH + H(+). The protein operates within lipid metabolism; fatty acid biosynthesis. Functionally, catalyzes the NADPH-dependent reduction of beta-ketoacyl-ACP substrates to beta-hydroxyacyl-ACP products, the first reductive step in the elongation cycle of fatty acid biosynthesis. The polypeptide is 3-oxoacyl-[acyl-carrier-protein] reductase FabG (fabG) (Buchnera aphidicola subsp. Schizaphis graminum (strain Sg)).